The chain runs to 466 residues: 3-isopropylmalate dehydratase large subunit (466 aa).

The [4Fe-4S] cluster site is built by Cys347, Cys407, and Cys410.

This sequence belongs to the aconitase/IPM isomerase family. LeuC type 1 subfamily. In terms of assembly, heterodimer of LeuC and LeuD. Requires [4Fe-4S] cluster as cofactor.

The catalysed reaction is (2R,3S)-3-isopropylmalate = (2S)-2-isopropylmalate. It participates in amino-acid biosynthesis; L-leucine biosynthesis; L-leucine from 3-methyl-2-oxobutanoate: step 2/4. In terms of biological role, catalyzes the isomerization between 2-isopropylmalate and 3-isopropylmalate, via the formation of 2-isopropylmaleate. The protein is 3-isopropylmalate dehydratase large subunit of Shewanella halifaxensis (strain HAW-EB4).